The following is a 135-amino-acid chain: Large ribosomal subunit protein mL41A (135 aa).

The N-terminal 13 residues, 1–13 (MGLISKIARGLVR), are a transit peptide targeting the mitochondrion.

Belongs to the mitochondrion-specific ribosomal protein mL41 family. As to quaternary structure, component of the mitochondrial ribosome large subunit (39S) which comprises a 16S rRNA and about 50 distinct proteins.

The protein resides in the mitochondrion. Component of the mitochondrial ribosome large subunit. Also involved in apoptosis and cell cycle. The chain is Large ribosomal subunit protein mL41A (mrpl41-a) from Xenopus laevis (African clawed frog).